The chain runs to 106 residues: Large ribosomal subunit protein eL42 (106 aa).

This sequence belongs to the eukaryotic ribosomal protein eL42 family.

This Candida tropicalis (Yeast) protein is Large ribosomal subunit protein eL42 (RPL44).